A 235-amino-acid polypeptide reads, in one-letter code: Probable GTP-binding protein EngB (235 aa).

Residues 23–219 (QVPEIAFAGR…NDKIIELLGL (197 aa)) form the EngB-type G domain. GTP-binding positions include 31 to 38 (GRSNAGKS), 58 to 62 (GRTQH), 92 to 95 (DLPG), 159 to 162 (TKSD), and 193 to 200 (FTAQMFSA). The Mg(2+) site is built by Ser-38 and Thr-60.

The protein belongs to the TRAFAC class TrmE-Era-EngA-EngB-Septin-like GTPase superfamily. EngB GTPase family. Requires Mg(2+) as cofactor.

Necessary for normal cell division and for the maintenance of normal septation. In Janthinobacterium sp. (strain Marseille) (Minibacterium massiliensis), this protein is Probable GTP-binding protein EngB.